Consider the following 192-residue polypeptide: Ribosomal RNA large subunit methyltransferase E (192 aa).

S-adenosyl-L-methionine-binding residues include glycine 48, phenylalanine 50, aspartate 67, aspartate 85, and aspartate 107. Residue lysine 147 is the Proton acceptor of the active site.

This sequence belongs to the class I-like SAM-binding methyltransferase superfamily. RNA methyltransferase RlmE family.

It is found in the cytoplasm. It catalyses the reaction uridine(2552) in 23S rRNA + S-adenosyl-L-methionine = 2'-O-methyluridine(2552) in 23S rRNA + S-adenosyl-L-homocysteine + H(+). In terms of biological role, specifically methylates the uridine in position 2552 of 23S rRNA at the 2'-O position of the ribose in the fully assembled 50S ribosomal subunit. The protein is Ribosomal RNA large subunit methyltransferase E of Borrelia garinii subsp. bavariensis (strain ATCC BAA-2496 / DSM 23469 / PBi) (Borreliella bavariensis).